A 193-amino-acid chain; its full sequence is Peptidyl-tRNA hydrolase (193 aa).

Tyrosine 17 is a tRNA binding site. Histidine 22 functions as the Proton acceptor in the catalytic mechanism. TRNA-binding residues include tyrosine 68, asparagine 70, and asparagine 116.

It belongs to the PTH family. Monomer.

It localises to the cytoplasm. The enzyme catalyses an N-acyl-L-alpha-aminoacyl-tRNA + H2O = an N-acyl-L-amino acid + a tRNA + H(+). In terms of biological role, hydrolyzes ribosome-free peptidyl-tRNAs (with 1 or more amino acids incorporated), which drop off the ribosome during protein synthesis, or as a result of ribosome stalling. Functionally, catalyzes the release of premature peptidyl moieties from peptidyl-tRNA molecules trapped in stalled 50S ribosomal subunits, and thus maintains levels of free tRNAs and 50S ribosomes. This Acinetobacter baumannii (strain AB307-0294) protein is Peptidyl-tRNA hydrolase.